The following is a 290-amino-acid chain: MLKTENLSVGYGNYVVVEGINLEINRGEILCIIGPNGAGKSTLLKTIATYLKPKKGVVYLNGKKIHDLKPKDLAKEMAVVLTERVNPGNMTGFDVVAIGRHPYTDLFGRLTERDKKIIIESARAVNAEYLLEKNFFEMSDGERQKIMIARALAQEPKVLILDEPTSFLDAKHKIELTLLLRKLADEKNLAIVVTLHDIELALRIADKMALIKNHKVIAYGYPENVMKREIVNELYDLKNANYSEVIGYFELKNNPIKNKKIFVICGGGTGANVLRYLVKNRYDVVVGHLA.

The ABC transporter domain occupies 2 to 238 (LKTENLSVGY…EIVNELYDLK (237 aa)). 34–41 (GPNGAGKS) is a binding site for ATP.

The protein belongs to the ABC transporter superfamily.

This is an uncharacterized protein from Methanocaldococcus jannaschii (strain ATCC 43067 / DSM 2661 / JAL-1 / JCM 10045 / NBRC 100440) (Methanococcus jannaschii).